The primary structure comprises 103 residues: Matrix Gla protein (103 aa).

The signal sequence occupies residues 1-19 (MKSLILLAILAALAVVTLC). A 4-carboxyglutamate modification is found at Glu-21. A phosphoserine mark is found at Ser-22, Ser-25, and Ser-28. The Gla domain occupies 51 to 97 (RAKVQERIRERSKPVHELNREACDDYRLCERYAMVYGYNAAYNRYFR). A 4-carboxyglutamate mark is found at Glu-56, Glu-60, Glu-67, and Glu-71. An intrachain disulfide couples Cys-73 to Cys-79. Residues 97–103 (RKRRGTK) constitute a propeptide, removed in mature form; probably by carboxypeptidase N.

This sequence belongs to the osteocalcin/matrix Gla protein family. In terms of processing, requires vitamin K-dependent gamma-carboxylation for its function.

The protein resides in the secreted. Its function is as follows. Associates with the organic matrix of bone and cartilage. Thought to act as an inhibitor of bone formation. The polypeptide is Matrix Gla protein (MGP) (Homo sapiens (Human)).